The following is a 155-amino-acid chain: Small ribosomal subunit protein uS7 (155 aa).

It belongs to the universal ribosomal protein uS7 family. Part of the 30S ribosomal subunit. Contacts proteins S9 and S11.

Functionally, one of the primary rRNA binding proteins, it binds directly to 16S rRNA where it nucleates assembly of the head domain of the 30S subunit. Is located at the subunit interface close to the decoding center, probably blocks exit of the E-site tRNA. This Mycoplasmoides gallisepticum (strain R(low / passage 15 / clone 2)) (Mycoplasma gallisepticum) protein is Small ribosomal subunit protein uS7.